We begin with the raw amino-acid sequence, 844 residues long: Fe(2+) transport protein A/Fe(2+) transporter FeoB fusion protein (844 aa).

The tract at residues 1–73 (MRLSELHTGD…EDAAKIEVEL (73 aa)) is feoA. The tract at residues 74-844 (ISSNATSSPA…LIYRIGILFF (771 aa)) is feoB. A compositionally biased stretch (polar residues) spans 79-106 (TSSPASNDIGEQSANPDSNESIPTNPTE). Positions 79–110 (TSSPASNDIGEQSANPDSNESIPTNPTEDISA) are disordered. The FeoB-type G domain maps to 126-289 (VIRVALIGNP…FDTLISIHEG (164 aa)). Residues 133 to 140 (GNPNCGKT), 158 to 162 (GVTVE), 179 to 182 (DLPG), 240 to 243 (NMFD), and 269 to 271 (VGR) contribute to the GTP site. 8 consecutive transmembrane segments (helical) span residues 418–438 (VLGF…TFVL), 475–495 (IGGV…YFFI), 520–540 (LHGK…PAIM), 559–579 (PLMS…AFFP), 581–601 (SAGL…VLLA), 646–666 (MGSI…YPRY), 786–806 (IIAL…ATVV), and 817–837 (WAVF…FLIY).

It in the N-terminal section; belongs to the FeoA family. The protein in the C-terminal section; belongs to the TRAFAC class TrmE-Era-EngA-EngB-Septin-like GTPase superfamily. FeoB GTPase (TC 9.A.8) family.

It is found in the cell inner membrane. Probable transporter of a GTP-driven Fe(2+) uptake system. The sequence is that of Fe(2+) transport protein A/Fe(2+) transporter FeoB fusion protein from Porphyromonas gingivalis (strain ATCC BAA-308 / W83).